The following is a 186-amino-acid chain: Glutathione-independent glyoxalase DJR-1.2 (186 aa).

Catalysis depends on residues E20, C105, and H124.

This sequence belongs to the peptidase C56 family. DJ-1 subfamily. In terms of tissue distribution, expressed in various tissues, including pharyngeal muscles, pharynx-intestinal valve, ventral nerve cord, spermatheca, rectal gland, inner labial (IL) cells of head neurons, phasmid (PHA/PHB) neurons in tail and supporting sheath/socket cells, as well as in head mesodermal cells (HMC), excretory canals and coelomocytes.

Its subcellular location is the cytoplasm. The enzyme catalyses methylglyoxal + H2O = (R)-lactate + H(+). Functionally, catalyzes the conversion of methylglyoxal (MG) or glyoxal (GO) to D-lactate or glycolic acid respectively in a single glutathione (GSH)-independent step. May play a role in detoxifying endogenously produced glyoxals. Involved in protection against glyoxal-induced cell death. Protects dopaminergic neurons from glyoxal-dependent neuronal degeneration. In Caenorhabditis elegans, this protein is Glutathione-independent glyoxalase DJR-1.2.